Reading from the N-terminus, the 148-residue chain is UPF0179 protein UNCMA_27840 (148 aa).

The protein belongs to the UPF0179 family.

The chain is UPF0179 protein UNCMA_27840 from Methanocella arvoryzae (strain DSM 22066 / NBRC 105507 / MRE50).